The sequence spans 396 residues: UPF0046 protein T07D4.2 (396 aa).

The segment at 73–94 (SRRGSIASGIPMDKKTRRKLSN) is disordered.

Belongs to the UPF0046 family.

This chain is UPF0046 protein T07D4.2, found in Caenorhabditis elegans.